We begin with the raw amino-acid sequence, 90 residues long: Alpha-latrotoxin associated low molecular weight protein (90 aa).

The N-terminal stretch at Met1 to Ala18 is a signal peptide.

The protein belongs to the arthropod CHH/MIH/GIH/VIH hormone family. In terms of tissue distribution, expressed by the venom gland.

It is found in the secreted. May increase the toxicity of alpha-latrotoxin and/or other venom components. Is non-toxic to mice and to the cockroach Periplaneta americana. This is Alpha-latrotoxin associated low molecular weight protein from Latrodectus geometricus (Brown widow spider).